A 496-amino-acid polypeptide reads, in one-letter code: RNA-binding motif protein, Y chromosome, family 1 member F/J (496 aa).

One can recognise an RRM domain in the interval 8-85; that stretch reads GKLFIGGLNR…KAIKVEQAKK (78 aa). Disordered regions lie at residues 81 to 345 and 452 to 496; these read EQAK…YAPP and KDQR…SSRY. Low complexity-rich tracts occupy residues 97–114 and 149–159; these read PASSRNRSPSGSLRSARG and PVKRGPSSRSG. A compositionally biased stretch (polar residues) spans 175-184; it reads NSWMGSQGPM. Basic and acidic residues-rich tracts occupy residues 204-214, 242-253, 276-289, 313-326, 335-345, and 484-496; these read RNDRMSTRHDG, DNGHSNRDEHSS, AYRDYGHSRRDESY, GYRDYGHSRRHESY, SSRETRDYAPP, and GESRSEKGDSSRY.

Interacts with splicing factor proteins SFRS3/SRP20, TRA2B/SFRS10, KHDRBS1/SAM68 and KHDRBS3. In terms of tissue distribution, testis-specific.

The protein resides in the nucleus. Its function is as follows. RNA-binding protein which may be involved in spermatogenesis. Required for sperm development, possibly by participating in pre-mRNA splicing in the testis. This chain is RNA-binding motif protein, Y chromosome, family 1 member F/J (RBMY1F), found in Homo sapiens (Human).